The chain runs to 288 residues: ATP synthase gamma chain 1 (288 aa).

Belongs to the ATPase gamma chain family. As to quaternary structure, F-type ATPases have 2 components, CF(1) - the catalytic core - and CF(0) - the membrane proton channel. CF(1) has five subunits: alpha(3), beta(3), gamma(1), delta(1), epsilon(1). CF(0) has three main subunits: a, b and c.

The protein localises to the cell inner membrane. Functionally, produces ATP from ADP in the presence of a proton gradient across the membrane. The gamma chain is believed to be important in regulating ATPase activity and the flow of protons through the CF(0) complex. This chain is ATP synthase gamma chain 1, found in Photobacterium profundum (strain SS9).